Reading from the N-terminus, the 30-residue chain is Rothein 3.3 (30 aa).

Residue Leu30 is modified to Leucine amide.

Expressed by the skin dorsal glands.

The protein resides in the secreted. Its function is as follows. Lacks antimicrobial activity. Does not inhibit the formation of NO by neuronal nitric oxide. In Litoria rothii (Roth's tree frog), this protein is Rothein 3.3.